A 309-amino-acid polypeptide reads, in one-letter code: Hydroxyacylglutathione hydrolase, mitochondrial (309 aa).

The N-terminal 24 residues, 1–24 (MVLGRGSLCLRSLSALGATCARRG), are a transit peptide targeting the mitochondrion. Position 90 is an N6-acetyllysine (Lys90). Residues His103, His105, Asp107, and His108 each coordinate Zn(2+). N6-acetyllysine is present on Lys117. The Zn(2+) site is built by His159 and Asp183. Residues 192-194 (KFY) and 222-224 (HEY) each bind substrate. Zn(2+) is bound at residue His222. An N6-acetyllysine; alternate modification is found at Lys230. Lys230 bears the N6-succinyllysine; alternate mark. Residue 298–301 (RREK) coordinates substrate.

It belongs to the metallo-beta-lactamase superfamily. Glyoxalase II family. Monomer. Zn(2+) serves as cofactor.

It localises to the mitochondrion matrix. The protein localises to the cytoplasm. The enzyme catalyses an S-(2-hydroxyacyl)glutathione + H2O = a 2-hydroxy carboxylate + glutathione + H(+). The catalysed reaction is (R)-S-lactoylglutathione + H2O = (R)-lactate + glutathione + H(+). It functions in the pathway secondary metabolite metabolism; methylglyoxal degradation; (R)-lactate from methylglyoxal: step 2/2. Functionally, thiolesterase that catalyzes the hydrolysis of S-D-lactoyl-glutathione to form glutathione and D-lactic acid. The chain is Hydroxyacylglutathione hydrolase, mitochondrial (Hagh) from Mus musculus (Mouse).